The following is a 77-amino-acid chain: uncharacterized protein (77 aa).

The segment at 54–77 is disordered; it reads HHGRKHKEDMEARHEQLTKGGTIL. The span at 59 to 70 shows a compositional bias: basic and acidic residues; sequence HKEDMEARHEQL.

This is an uncharacterized protein from Escherichia coli O157:H7.